The following is a 209-amino-acid chain: Outer-membrane lipoprotein LolB (209 aa).

Positions 1-17 are cleaved as a signal peptide; it reads MATVFSRALGALVLGVA. Cys18 carries N-palmitoyl cysteine lipidation. A lipid anchor (S-diacylglycerol cysteine) is attached at Cys18.

This sequence belongs to the LolB family. As to quaternary structure, monomer.

Its subcellular location is the cell outer membrane. Plays a critical role in the incorporation of lipoproteins in the outer membrane after they are released by the LolA protein. This Ralstonia nicotianae (strain ATCC BAA-1114 / GMI1000) (Ralstonia solanacearum) protein is Outer-membrane lipoprotein LolB.